Reading from the N-terminus, the 224-residue chain is Serum amyloid P-component (224 aa).

Positions 1–19 are cleaved as a signal peptide; that stretch reads MERLLLWVSVLASLPEAFA. Residues 24-224 enclose the Pentraxin (PTX) domain; the sequence is TGKVFVFPRE…YVVIKPRVWS (201 aa). Asn-51 carries an N-linked (GlcNAc...) asparagine glycan. A disulfide bridge connects residues Cys-55 and Cys-114. Positions 77, 78, 155, 156, 157, and 167 each coordinate Ca(2+).

Belongs to the pentraxin family. As to quaternary structure, homopentamer. Pentraxin (or pentaxin) have a discoid arrangement of 5 non-covalently bound subunits. Ca(2+) is required as a cofactor.

The protein resides in the secreted. This chain is Serum amyloid P-component (APCS), found in Sus scrofa (Pig).